The sequence spans 378 residues: MAAPLRPVPPQPAPRRLPTTAPLGHDTSDVLQQIMAITDQSLDEAQARKHALNCHRMKSALFSVLCEIKGKTAVSIQFQEEDPPDAQLLRLDNMLLAEGVSRPEKRGRGAAAGSTATPGGCPNDNSIEHSDYRAKLSQIRQIYHSELEKYEQACREFTTHVTNLLREQSRVRPVSCREMEHMVNTIQSKFSAIQRQLKQSTCEAVMTLRSRFLDARRKRRNFSKQATDVLNEYFYSHLSNPYPSEETKEELARKGGITVSQVSNWFGNKRIRYKKNTGKFQEEATMYTGKASTVTKARRPRGQSSCQSTPSPGPCGPLPLTNGSDVVLTLRTLAFLQPPTGGVCLQPLVHSNWQRAAPQPASSPAGESGSFNWDAASN.

Positions 1 to 15 (MAAPLRPVPPQPAPR) are enriched in pro residues. Disordered regions lie at residues 1 to 24 (MAAP…APLG) and 100 to 125 (VSRP…PNDN). Positions 22–214 (PLGHDTSDVL…VMTLRSRFLD (193 aa)) constitute a PBC domain. The PBC-A stretch occupies residues 29 to 107 (DVLQQIMAIT…EGVSRPEKRG (79 aa)). Residues 109 to 120 (GAAAGSTATPGG) show a composition bias toward low complexity. The tract at residues 110-214 (AAAGSTATPG…VMTLRSRFLD (105 aa)) is PBC-B. Residues 215-277 (ARRKRRNFSK…NKRIRYKKNT (63 aa)) constitute a DNA-binding region (homeobox; TALE-type). Disordered stretches follow at residues 291–320 (ASTV…PLPL) and 355–378 (RAAP…AASN). Positions 356 to 370 (AAPQPASSPAGESGS) are enriched in low complexity.

It belongs to the TALE/PBX homeobox family. In terms of tissue distribution, almost exclusively expressed in testis.

The protein localises to the nucleus. This Mus musculus (Mouse) protein is Pre-B-cell leukemia transcription factor 4 (Pbx4).